Reading from the N-terminus, the 1404-residue chain is DNA-directed RNA polymerase subunit beta' (1404 aa).

Positions 70, 72, 85, and 88 each coordinate Zn(2+). 3 residues coordinate Mg(2+): aspartate 460, aspartate 462, and aspartate 464. Zn(2+) is bound by residues cysteine 814, cysteine 889, cysteine 896, and cysteine 899. Positions 1377-1404 (DSEMETLSGKPAAAEPVAAVADAGADEE) are disordered. A compositionally biased stretch (low complexity) spans 1387–1404 (PAAAEPVAAVADAGADEE).

It belongs to the RNA polymerase beta' chain family. The RNAP catalytic core consists of 2 alpha, 1 beta, 1 beta' and 1 omega subunit. When a sigma factor is associated with the core the holoenzyme is formed, which can initiate transcription. The cofactor is Mg(2+). Zn(2+) is required as a cofactor.

It carries out the reaction RNA(n) + a ribonucleoside 5'-triphosphate = RNA(n+1) + diphosphate. DNA-dependent RNA polymerase catalyzes the transcription of DNA into RNA using the four ribonucleoside triphosphates as substrates. The protein is DNA-directed RNA polymerase subunit beta' of Xanthomonas euvesicatoria pv. vesicatoria (strain 85-10) (Xanthomonas campestris pv. vesicatoria).